The following is a 1013-amino-acid chain: MAEASERLYRVQYAKSGRASCKKCSESIPKDSLRMAIMVQSPMFDGKVPHWYHFSCFWKVGQSIRHPDVEVDGFSELRWDDQQKVKKTAEAGGVAGKGQDGSGGKAEKTLGDFAAEYAKSNRSMCKGCLEKIEKGQMRLSKKMVDPEKPQLGMIDRWYHPTCFVKKRDELGFRPEYSASQLKGFSLLSAEDKEALKKQLPAIKNEGKRKGDEVDGTDEVAKKKSRKETDKYSKLEKALKAQNELIWNIKDELKKACSTNDLKELLIFNQQQVPSGESAILDRVADGMAFGALLPCKECSGQLVFKSDAYYCTGDVTAWTKCMVKTQNPSRKEWVTPKEFREISYLKKLKVKKQDRIFPPESSAPITVHWPLSVTSAPTAVNSSAPADKPLSNMKILTLGKLSQNKDEAKAVIEKLGGKLTGSANKASLCISIKKEVEKMNKKMEEVKEANIRVVSEDFLQDVSASTKSLQDLLSAHSLSPWGAEVKAEPGEVVAPRGKSAAPSKKSKGCFKEEGVNKSEKRMKLTLKGGAAVDPDSGLEHSAHVLEKGGKVFSATLGLVDIVKGTNSYYKLQLLEDDKESRYWIFRSWGRLGTVIGSNKLEQMPSKEEAVEQFMKLYEEKTGNAWHSKNFTKYPKKFYPLEIDYGQDEEAVKKLTVKPGTKSKLPKPVQELVGMIFDVDSMKKALVEYEIDLQKMPLGKLSRRQIQAAYSILSEVQQPVSQGSSESQILDLSNRFYTLIPHDFGMKKPPLLNNADSVQAKVEMLDNLLDIEVAYSLLRGGSDDSSKDPIDVNYEKLKTDIKVVDRDSEEAEVIRKYVKNTHATTHNAYDLEVIDIFKIEREGESQRYKPFRQLHNRRLLWHGSRTTNFAGILSQGLRIAPPEAPVTGYMFGKGIYFADMVSKSANYCHTSQGDPIGLIMLGEVALGNMYELKHASHISKLPKGKHSVKGLGKTTPDPSASITLEGVEVPLGTGIPSGVNDTALLYNEYIVYDIAQVNLKYLLKLKFNFKTSLW.

Ala2 carries the post-translational modification N-acetylalanine. The PARP-type 1 zinc-finger motif lies at 9–93; sequence YRVQYAKSGR…KVKKTAEAGG (85 aa). Residues Cys21 and Cys24 each coordinate Zn(2+). A Phosphoserine modification is found at Ser41. Zn(2+) contacts are provided by His53 and Cys56. 2 positions are modified to N6-acetyllysine: Lys97 and Lys105. The PARP-type 2 zinc finger occupies 113–203; it reads FAAEYAKSNR…ALKKQLPAIK (91 aa). The Zn(2+) site is built by Cys125 and Cys128. Lys131 carries the N6-acetyllysine modification. Residues His159 and Cys162 each contribute to the Zn(2+) site. A phosphoserine mark is found at Ser177, Ser179, and Ser185. Lys192 is covalently cross-linked (Glycyl lysine isopeptide (Lys-Gly) (interchain with G-Cter in SUMO2)). The tract at residues 200–226 is disordered; sequence PAIKNEGKRKGDEVDGTDEVAKKKSRK. A Glycyl lysine isopeptide (Lys-Gly) (interchain with G-Cter in SUMO1); alternate cross-link involves residue Lys203. Lys203 participates in a covalent cross-link: Glycyl lysine isopeptide (Lys-Gly) (interchain with G-Cter in SUMO2); alternate. Residues 204 to 226 are compositionally biased toward basic and acidic residues; it reads NEGKRKGDEVDGTDEVAKKKSRK. Short sequence motifs (nuclear localization signal) lie at residues 207 to 209 and 221 to 226; these read KRK and KKKSRK. One can recognise a PADR1 zinc-binding domain in the interval 225–359; the sequence is RKETDKYSKL…VKKQDRIFPP (135 aa). Residue Lys249 forms a Glycyl lysine isopeptide (Lys-Gly) (interchain with G-Cter in SUMO2) linkage. A phosphoserine mark is found at Ser274 and Ser277. Positions 290-332 are zinc ribbon; it reads GALLPCKECSGQLVFKSDAYYCTGDVTAWTKCMVKTQNPSRKE. Cys295, Cys298, Cys311, and Cys321 together coordinate Zn(2+). The automodification domain stretch occupies residues 373–523; sequence VTSAPTAVNS…GVNKSEKRMK (151 aa). Residues 385–476 enclose the BRCT domain; sequence PADKPLSNMK…KSLQDLLSAH (92 aa). Asp387 carries the post-translational modification PolyADP-ribosyl aspartic acid. 8 positions are modified to polyADP-ribosyl glutamic acid: Glu407, Glu413, Glu435, Glu437, Glu444, Glu445, Glu448, and Glu456. A Glycyl lysine isopeptide (Lys-Gly) (interchain with G-Cter in SUMO2) cross-link involves residue Lys467. Position 484 is a polyADP-ribosyl glutamic acid (Glu484). Residue Lys486 forms a Glycyl lysine isopeptide (Lys-Gly) (interchain with G-Cter in SUMO1); alternate linkage. Lys486 is covalently cross-linked (Glycyl lysine isopeptide (Lys-Gly) (interchain with G-Cter in SUMO2); alternate). PolyADP-ribosyl glutamic acid occurs at positions 488 and 491. Residues 489–508 form a disordered region; it reads PGEVVAPRGKSAAPSKKSKG. The span at 494-503 shows a compositional bias: low complexity; sequence APRGKSAAPS. 3 positions are modified to ADP-ribosylserine: Ser499, Ser503, and Ser506. Lys511 is covalently cross-linked (Glycyl lysine isopeptide (Lys-Gly) (interchain with G-Cter in SUMO2)). PolyADP-ribosyl glutamic acid is present on residues Glu512 and Glu513. Ser518 carries the post-translational modification ADP-ribosylserine. Glu519 is subject to PolyADP-ribosyl glutamic acid. Position 520 is an N6-(ADP-ribosyl)lysine (Lys520). Lys527 participates in a covalent cross-link: Glycyl lysine isopeptide (Lys-Gly) (interchain with G-Cter in SUMO2). In terms of domain architecture, WGR spans 541-637; it reads SAHVLEKGGK…KNFTKYPKKF (97 aa). The residue at position 593 (Thr593) is a Phosphothreonine. N6-acetyllysine is present on residues Lys599 and Lys620. Residues 661–778 enclose the PARP alpha-helical domain; the sequence is KSKLPKPVQE…DIEVAYSLLR (118 aa). Lys747 participates in a covalent cross-link: Glycyl lysine isopeptide (Lys-Gly) (interchain with G-Cter in SUMO1); alternate. Lys747 participates in a covalent cross-link: Glycyl lysine isopeptide (Lys-Gly) (interchain with G-Cter in SUMO2); alternate. A phosphoserine mark is found at Ser781 and Ser785. The region spanning 787-1013 is the PARP catalytic domain; it reads DPIDVNYEKL…LKFNFKTSLW (227 aa). NAD(+) is bound by residues 861–863, Gly870, Arg877, and Ser903; that span reads HGS. Glu987 acts as the For poly [ADP-ribose] polymerase activity in catalysis.

The protein belongs to the ARTD/PARP family. Homodimer; PARP-type zinc-fingers from separate PARP1 molecules form a dimer module that specifically recognizes DNA strand breaks. Heterodimer; heterodimerizes with PARP2. Interacts (via the PARP catalytic domain) with HPF1. Interacts with NMNAT1. Interacts with nucleosomes; with a preference for nucleosomes containing H2A.X. Interacts with APTX. Component of a base excision repair (BER) complex, containing at least XRCC1, PARP1, PARP2, POLB and LRIG3. Interacts with SRY. The SWAP complex consists of NPM1, NCL, PARP1 and SWAP70. Interacts with TIAM2. Interacts with PARP3; leading to activate PARP1 in absence of DNA. Interacts (when poly-ADP-ribosylated) with CHD1L (via macro domain). Interacts with the DNA polymerase alpha catalytic subunit POLA1; this interaction functions as part of the control of replication fork progression. Interacts with EEF1A1 and TXK. Interacts with RNF4. Interacts with RNF146. Interacts with ZNF423. Interacts with APLF. Interacts with SNAI1 (via zinc fingers); the interaction requires SNAI1 to be poly-ADP-ribosylated and non-phosphorylated (active) by GSK3B. Interacts (when poly-ADP-ribosylated) with PARP9. Interacts with NR4A3; activates PARP1 by improving acetylation of PARP1 and suppressing the interaction between PARP1 and SIRT1. Interacts (via catalytic domain) with PUM3; the interaction inhibits the poly-ADP-ribosylation activity of PARP1 and the degradation of PARP1 by CASP3 following genotoxic stress. Interacts with ZNF365. Interacts with RRP1B. Interacts with TIMELESS; the interaction is direct. Interacts with CGAS; leading to impede the formation of the PARP1-TIMELESS complex. Interacts with KHDC3L, the interaction is increased following the formation of DNA double-strand breaks. Interacts (when auto-poly-ADP-ribosylated) with XRCC1; leading to inhibit PARP1 ADP-ribosyltransferase activity. Interacts with SPINDOC; promoting PARP1 ADP-ribosyltransferase activity. Interacts with BANF1; leading to inhibit PARP1 ADP-ribosyltransferase activity in response to oxidative DNA damage. Interacts (when sumoylated and ubiquitinated) with VCP/p97; leading to its extraction from chromatin. Interacts with YARS1; promoting PARP1 ADP-ribosyltransferase activity. Interacts with PACMP micropeptide; Interacts with PACMP micropeptide; interaction. Interacts (when poly-ADP-ribosylated) with isoform 1 of MACROH2A1; MACROH2A1 specifically binds to poly-ADP-ribose chains and inhibits PARP1 activity, limiting the consumption of nuclear NAD(+). Interacts with CARM1; promoting recruitment to replication forks. Interacts with RECQL. Interacts with ZNF32; the interaction reshapes ZNF432 interacting proteins. Interacts with TPRN; TPRN interacts with a number of DNA damage response proteins, is recruited to sites of DNA damage and may play a role in DNA damage repair. In terms of assembly, interacts (when auto-poly-ADP-ribosylated) with AIFM1. Post-translationally, poly-ADP-ribosylated on serine, glutamate and aspartate residues by autocatalysis. Auto-ADP-ribosylation on serine takes place following interaction with HPF1. Auto poly-ADP-ribosylation on serine residues promotes its dissociation from chromatin. Poly-ADP-ribosylated by PARP2; poly-ADP-ribosylation mediates the recruitment of CHD1L to DNA damage sites. Mono-ADP-ribosylated at Lys-520 by SIRT6 in response to oxidative stress, promoting recruitment to double-strand breaks (DSBs) sites. In terms of processing, S-nitrosylated, leading to inhibit transcription regulation activity. Phosphorylated at Thr-593 by PRKDC in response to DNA damage following virus infection, promoting its translocation to the cytosol. Phosphorylated by TXK. Post-translationally, proteolytically cleaved by caspase-3 (CASP3) and caspase-7 (CASP7) in response to apoptosis to generate the Poly [ADP-ribose] polymerase 1, processed N-terminus and Poly [ADP-ribose] polymerase 1, processed C-terminus forms. In terms of processing, sumoylated with SUMO1 or SUMO2 by PIAS4 following prolonged residence (trapping) to chromatin. Sumoylation promotes ubiquitination by RNF4 and removal from chromatin by VCP/p97. Ubiquitinated by RNF4 following sumoylation by PIAS4 in response to prolonged residence (trapping) to chromatin. Ubiquitination promotes removal from chromatin by VCP/p97. As to expression, widely expressed. Expression is correlated with proliferation, with higher levels occurring during early fetal development and organogenesis and in the highly proliferative cell compartments of adult. Expressed in B-cells that have been induced to switch to various Ig isotypes.

The protein resides in the chromosome. The protein localises to the nucleus. Its subcellular location is the nucleolus. It localises to the cytoplasm. It is found in the cytosol. It catalyses the reaction NAD(+) + (ADP-D-ribosyl)n-acceptor = nicotinamide + (ADP-D-ribosyl)n+1-acceptor + H(+).. The catalysed reaction is L-seryl-[protein] + NAD(+) = O-(ADP-D-ribosyl)-L-seryl-[protein] + nicotinamide + H(+). It carries out the reaction L-aspartyl-[protein] + NAD(+) = 4-O-(ADP-D-ribosyl)-L-aspartyl-[protein] + nicotinamide. The enzyme catalyses L-glutamyl-[protein] + NAD(+) = 5-O-(ADP-D-ribosyl)-L-glutamyl-[protein] + nicotinamide. It catalyses the reaction L-tyrosyl-[protein] + NAD(+) = O-(ADP-D-ribosyl)-L-tyrosyl-[protein] + nicotinamide + H(+). The catalysed reaction is L-histidyl-[protein] + NAD(+) = N(tele)-(ADP-D-ribosyl)-L-histidyl-[protein] + nicotinamide + H(+). ADP-ribosyltransferase activity is regulated via an allosteric activation mechanism. In absence of activation signal, PARP1 is autoinhibited by the PARP alpha-helical domain (also named HD region), which prevents effective NAD(+)-binding. Activity is highly stimulated by signals, such as DNA strand breaks. Binding to damaged DNA unfolds the PARP alpha-helical domain, relieving autoinhibition. Poly-ADP-ribosyltransferase activity is tightly regulated and PARP1 is removed from damaged chromatin following initial poly-ADP-ribosylation of chromatin to avoid prolonged residence (trapping) that has cytotoxic consequences. A number of factors (VCP/p97) or post-translational modifications (auto-poly-ADP-ribosylation or ubiquitination) promote PARP1 removal from chromatin. Poly-ADP-ribosyltransferase that mediates poly-ADP-ribosylation of proteins and plays a key role in DNA repair. Mediates glutamate, aspartate, serine, histidine or tyrosine ADP-ribosylation of proteins: the ADP-D-ribosyl group of NAD(+) is transferred to the acceptor carboxyl group of target residues and further ADP-ribosyl groups are transferred to the 2'-position of the terminal adenosine moiety, building up a polymer with an average chain length of 20-30 units. Serine ADP-ribosylation of proteins constitutes the primary form of ADP-ribosylation of proteins in response to DNA damage. Specificity for the different amino acids is conferred by interacting factors, such as HPF1 and NMNAT1. Following interaction with HPF1, catalyzes serine ADP-ribosylation of target proteins; HPF1 confers serine specificity by completing the PARP1 active site. Also catalyzes tyrosine ADP-ribosylation of target proteins following interaction with HPF1. Following interaction with NMNAT1, catalyzes glutamate and aspartate ADP-ribosylation of target proteins; NMNAT1 confers glutamate and aspartate specificity. PARP1 initiates the repair of DNA breaks: recognizes and binds DNA breaks within chromatin and recruits HPF1, licensing serine ADP-ribosylation of target proteins, such as histones (H2BS6ADPr and H3S10ADPr), thereby promoting decompaction of chromatin and the recruitment of repair factors leading to the reparation of DNA strand breaks. HPF1 initiates serine ADP-ribosylation but restricts the polymerase activity of PARP1 in order to limit the length of poly-ADP-ribose chains. In addition to base excision repair (BER) pathway, also involved in double-strand breaks (DSBs) repair: together with TIMELESS, accumulates at DNA damage sites and promotes homologous recombination repair by mediating poly-ADP-ribosylation. Mediates the poly-ADP-ribosylation of a number of proteins, including itself, APLF, CHFR and NFAT5. In addition to proteins, also able to ADP-ribosylate DNA: catalyzes ADP-ribosylation of DNA strand break termini containing terminal phosphates and a 2'-OH group in single- and double-stranded DNA, respectively. Required for PARP9 and DTX3L recruitment to DNA damage sites. PARP1-dependent PARP9-DTX3L-mediated ubiquitination promotes the rapid and specific recruitment of 53BP1/TP53BP1, UIMC1/RAP80, and BRCA1 to DNA damage sites. PARP1-mediated DNA repair in neurons plays a role in sleep: senses DNA damage in neurons and promotes sleep, facilitating efficient DNA repair. In addition to DNA repair, also involved in other processes, such as transcription regulation, programmed cell death, membrane repair, adipogenesis and innate immunity. Acts as a repressor of transcription: binds to nucleosomes and modulates chromatin structure in a manner similar to histone H1, thereby altering RNA polymerase II. Acts both as a positive and negative regulator of transcription elongation, depending on the context. Acts as a positive regulator of transcription elongation by mediating poly-ADP-ribosylation of NELFE, preventing RNA-binding activity of NELFE and relieving transcription pausing. Acts as a negative regulator of transcription elongation in response to DNA damage by catalyzing poly-ADP-ribosylation of CCNT1, disrupting the phase separation activity of CCNT1 and subsequent activation of CDK9. Involved in replication fork progression following interaction with CARM1: mediates poly-ADP-ribosylation at replication forks, slowing fork progression. Poly-ADP-ribose chains generated by PARP1 also play a role in poly-ADP-ribose-dependent cell death, a process named parthanatos. Also acts as a negative regulator of the cGAS-STING pathway. Acts by mediating poly-ADP-ribosylation of CGAS: PARP1 translocates into the cytosol following phosphorylation by PRKDC and catalyzes poly-ADP-ribosylation and inactivation of CGAS. Acts as a negative regulator of adipogenesis: catalyzes poly-ADP-ribosylation of histone H2B on 'Glu-35' (H2BE35ADPr) following interaction with NMNAT1, inhibiting phosphorylation of H2B at 'Ser-36' (H2BS36ph), thereby blocking expression of pro-adipogenetic genes. Involved in the synthesis of ATP in the nucleus, together with NMNAT1, PARG and NUDT5. Nuclear ATP generation is required for extensive chromatin remodeling events that are energy-consuming. Functionally, promotes AIFM1-mediated apoptosis. This form, which translocates into the cytoplasm following cleavage by caspase-3 (CASP3) and caspase-7 (CASP7) in response to apoptosis, is auto-poly-ADP-ribosylated and serves as a poly-ADP-ribose carrier to induce AIFM1-mediated apoptosis. In terms of biological role, this cleavage form irreversibly binds to DNA breaks and interferes with DNA repair, promoting DNA damage-induced apoptosis. In Mus musculus (Mouse), this protein is Poly [ADP-ribose] polymerase 1 (Parp1).